Here is a 145-residue protein sequence, read N- to C-terminus: Small ribosomal subunit protein uS17c (145 aa).

The N-terminal 36 residues, 1–36 (MLLTTPFVSSPVRVQGNGGSGASPWAGAATALRIQA), are a transit peptide targeting the chloroplast. Residues 101 to 145 (KTKHFLAVPLPPRDTRRKSQLLPPLQSQSQSQDQDQPPTPPPSSD) form a disordered region. Residues 120 to 136 (QLLPPLQSQSQSQDQDQ) are compositionally biased toward low complexity.

Belongs to the universal ribosomal protein uS17 family. Part of the 30S ribosomal subunit.

The protein localises to the plastid. Its subcellular location is the chloroplast. Its function is as follows. One of the primary rRNA binding proteins, it binds specifically to the 5'-end of 16S ribosomal RNA. The protein is Small ribosomal subunit protein uS17c (RPS17) of Oryza sativa subsp. japonica (Rice).